Consider the following 286-residue polypeptide: Glycine--tRNA ligase alpha subunit (286 aa).

This sequence belongs to the class-II aminoacyl-tRNA synthetase family. Tetramer of two alpha and two beta subunits.

It localises to the cytoplasm. The catalysed reaction is tRNA(Gly) + glycine + ATP = glycyl-tRNA(Gly) + AMP + diphosphate. In Campylobacter lari (strain RM2100 / D67 / ATCC BAA-1060), this protein is Glycine--tRNA ligase alpha subunit.